The following is a 105-amino-acid chain: uncharacterized protein (105 aa).

The protein belongs to the M.jannaschii MJ0023/MJ0349/MJ1072/MJ1074/MJ1107/MJECL16 family.

This is an uncharacterized protein from Methanocaldococcus jannaschii (strain ATCC 43067 / DSM 2661 / JAL-1 / JCM 10045 / NBRC 100440) (Methanococcus jannaschii).